The following is a 277-amino-acid chain: Sulfur carrier protein FdhD (277 aa).

Cys121 functions as the Cysteine persulfide intermediate in the catalytic mechanism. Phe260–Arg265 lines the Mo-bis(molybdopterin guanine dinucleotide) pocket.

It belongs to the FdhD family.

The protein resides in the cytoplasm. Required for formate dehydrogenase (FDH) activity. Acts as a sulfur carrier protein that transfers sulfur from IscS to the molybdenum cofactor prior to its insertion into FDH. In Escherichia coli O6:K15:H31 (strain 536 / UPEC), this protein is Sulfur carrier protein FdhD.